The sequence spans 131 residues: Small ribosomal subunit protein uS8 (131 aa).

This sequence belongs to the universal ribosomal protein uS8 family. As to quaternary structure, part of the 30S ribosomal subunit. Contacts proteins S5 and S12.

Functionally, one of the primary rRNA binding proteins, it binds directly to 16S rRNA central domain where it helps coordinate assembly of the platform of the 30S subunit. This Methylobacillus flagellatus (strain ATCC 51484 / DSM 6875 / VKM B-1610 / KT) protein is Small ribosomal subunit protein uS8.